We begin with the raw amino-acid sequence, 109 residues long: Phosphoribosyl-ATP pyrophosphatase (109 aa).

This sequence belongs to the PRA-PH family.

Its subcellular location is the cytoplasm. It carries out the reaction 1-(5-phospho-beta-D-ribosyl)-ATP + H2O = 1-(5-phospho-beta-D-ribosyl)-5'-AMP + diphosphate + H(+). The protein operates within amino-acid biosynthesis; L-histidine biosynthesis; L-histidine from 5-phospho-alpha-D-ribose 1-diphosphate: step 2/9. The polypeptide is Phosphoribosyl-ATP pyrophosphatase (Paramagnetospirillum magneticum (strain ATCC 700264 / AMB-1) (Magnetospirillum magneticum)).